The following is a 298-amino-acid chain: Protoheme IX farnesyltransferase (298 aa).

The next 9 helical transmembrane spans lie at 24–44 (VIQL…PGLP), 49–69 (LQLA…AAAF), 100–120 (LLFS…WVNP), 121–141 (LTMW…TVIL), 149–169 (IVIG…AMAG), 175–195 (ALIL…ALAL), 220–240 (LMVL…YVYG), 244–264 (WLYL…AFYL), and 277–297 (FRFS…DHYL).

The protein belongs to the UbiA prenyltransferase family. Protoheme IX farnesyltransferase subfamily.

The protein localises to the cell inner membrane. The catalysed reaction is heme b + (2E,6E)-farnesyl diphosphate + H2O = Fe(II)-heme o + diphosphate. It participates in porphyrin-containing compound metabolism; heme O biosynthesis; heme O from protoheme: step 1/1. Its function is as follows. Converts heme B (protoheme IX) to heme O by substitution of the vinyl group on carbon 2 of heme B porphyrin ring with a hydroxyethyl farnesyl side group. In Albidiferax ferrireducens (strain ATCC BAA-621 / DSM 15236 / T118) (Rhodoferax ferrireducens), this protein is Protoheme IX farnesyltransferase.